The following is a 214-amino-acid chain: Osteoclast-stimulating factor 1 (214 aa).

In terms of domain architecture, SH3 spans 12–71; that stretch reads GQVKVYRALFTFDPRTPDELYFEEGDILYISDTSDSNWWKGTCRGRTGLIPSNYVAEQAE. 3 ANK repeats span residues 72 to 101, 105 to 135, and 139 to 168; these read SIDNPMHEAAKRGNLSWLRECLDNKVGING, AGNTSLYWACHGGHKDVVEILLSQPNCELNQ, and LGDTPLHAAAWKGYSDIVEMLLNKNARTDV.

It is found in the cytoplasm. In terms of biological role, induces bone resorption, acting probably through a signaling cascade which results in the secretion of factor(s) enhancing osteoclast formation and activity. In Danio rerio (Zebrafish), this protein is Osteoclast-stimulating factor 1 (ostf1).